A 61-amino-acid chain; its full sequence is Temporin-SN3 (61 aa).

The N-terminal stretch at 1 to 22 (MFTLKKTLLLLFFLGTINLSLC) is a signal peptide. The propeptide at 23–44 (EEERNAEEERRDGDDEMDVEVK) is removed in mature form. K61 bears the Lysine amide mark.

It belongs to the frog skin active peptide (FSAP) family. Temporin subfamily. Expressed by the skin glands.

The protein resides in the secreted. Its function is as follows. Antimicrobial peptide. Active against some Gram-positive and Gram-negative bacterial strains. Active against fungus C.glabrata 090902 but not against C.albicans ATCC 12231. Shows weak hemolytic activity against human erythrocytes. This Sylvirana spinulosa (Fine-spined frog) protein is Temporin-SN3.